Here is a 255-residue protein sequence, read N- to C-terminus: 5-oxoprolinase subunit A (255 aa).

The protein belongs to the LamB/PxpA family. As to quaternary structure, forms a complex composed of PxpA, PxpB and PxpC.

The enzyme catalyses 5-oxo-L-proline + ATP + 2 H2O = L-glutamate + ADP + phosphate + H(+). Functionally, catalyzes the cleavage of 5-oxoproline to form L-glutamate coupled to the hydrolysis of ATP to ADP and inorganic phosphate. The chain is 5-oxoprolinase subunit A from Nitrobacter hamburgensis (strain DSM 10229 / NCIMB 13809 / X14).